A 99-amino-acid polypeptide reads, in one-letter code: RNA-binding protein Hfq (99 aa).

The Sm domain occupies 9 to 68; the sequence is DPFLNALRRERVPVSIYLVNGIKLQGQIESFDQFVILLKNTVSQMVYKHAISTVVPSRPV. A disordered region spans residues 64–99; it reads PSRPVSHHSNNPGGSNNYHGSNTTAQQQSQDADDAE. Residues 70–93 are compositionally biased toward low complexity; sequence HHSNNPGGSNNYHGSNTTAQQQSQ.

Belongs to the Hfq family. In terms of assembly, homohexamer.

Functionally, RNA chaperone that binds small regulatory RNA (sRNAs) and mRNAs to facilitate mRNA translational regulation in response to envelope stress, environmental stress and changes in metabolite concentrations. Also binds with high specificity to tRNAs. This is RNA-binding protein Hfq from Pectobacterium atrosepticum (strain SCRI 1043 / ATCC BAA-672) (Erwinia carotovora subsp. atroseptica).